A 54-amino-acid chain; its full sequence is uncharacterized protein (54 aa).

Residues aspartate 23–asparagine 35 show a composition bias toward basic and acidic residues. Positions aspartate 23–valine 54 are disordered. Over residues glutamine 42 to valine 54 the composition is skewed to polar residues.

This is an uncharacterized protein from Bacillus subtilis (strain 168).